Reading from the N-terminus, the 250-residue chain is 3-deoxy-manno-octulosonate cytidylyltransferase (250 aa).

Belongs to the KdsB family.

Its subcellular location is the cytoplasm. The enzyme catalyses 3-deoxy-alpha-D-manno-oct-2-ulosonate + CTP = CMP-3-deoxy-beta-D-manno-octulosonate + diphosphate. It participates in nucleotide-sugar biosynthesis; CMP-3-deoxy-D-manno-octulosonate biosynthesis; CMP-3-deoxy-D-manno-octulosonate from 3-deoxy-D-manno-octulosonate and CTP: step 1/1. It functions in the pathway bacterial outer membrane biogenesis; lipopolysaccharide biosynthesis. Functionally, activates KDO (a required 8-carbon sugar) for incorporation into bacterial lipopolysaccharide in Gram-negative bacteria. This chain is 3-deoxy-manno-octulosonate cytidylyltransferase, found in Rhodopirellula baltica (strain DSM 10527 / NCIMB 13988 / SH1).